The sequence spans 842 residues: DNA topoisomerase-like protein cin-4 (842 aa).

A compositionally biased stretch (basic and acidic residues) spans 1 to 26 (MSEEDRNVFTSIDKKGGGSKQMDDLN). The disordered stretch occupies residues 1–50 (MSEEDRNVFTSIDKKGGGSKQMDDLNQKCPKRKTSKLKGIPKLEDANDAG). Residues 314 to 783 (IPCLVDGLKP…TWQDLWITDL (470 aa)) form the Topo IIA-type catalytic domain.

Belongs to the type II topoisomerase family.

Functionally, plays a role in the removal of cohesin from kinetochores on mitotic chromosomes and is required for centromere resolution. The polypeptide is DNA topoisomerase-like protein cin-4 (Caenorhabditis elegans).